We begin with the raw amino-acid sequence, 196 residues long: Protein LSM12 homolog B (196 aa).

The Sm domain maps to 3–70; that stretch reads APGPGEYFSV…LAYVSEVDII (68 aa). The AD domain maps to 81 to 175; that stretch reads ASLNFNKLVN…IVEKHFRDVE (95 aa).

The protein belongs to the LSM12 family.

This chain is Protein LSM12 homolog B (lsm12b), found in Danio rerio (Zebrafish).